The primary structure comprises 61 residues: Small ribosomal subunit protein uS14 (61 aa).

Positions 24, 27, 40, and 43 each coordinate Zn(2+).

This sequence belongs to the universal ribosomal protein uS14 family. Zinc-binding uS14 subfamily. Part of the 30S ribosomal subunit. Contacts proteins S3 and S10. The cofactor is Zn(2+).

In terms of biological role, binds 16S rRNA, required for the assembly of 30S particles and may also be responsible for determining the conformation of the 16S rRNA at the A site. In Borrelia duttonii (strain Ly), this protein is Small ribosomal subunit protein uS14.